Reading from the N-terminus, the 204-residue chain is Urease accessory protein UreG (204 aa).

GTP is bound at residue 11 to 18 (GPVGAGKT).

Belongs to the SIMIBI class G3E GTPase family. UreG subfamily. As to quaternary structure, homodimer. UreD, UreF and UreG form a complex that acts as a GTP-hydrolysis-dependent molecular chaperone, activating the urease apoprotein by helping to assemble the nickel containing metallocenter of UreC. The UreE protein probably delivers the nickel.

It localises to the cytoplasm. Facilitates the functional incorporation of the urease nickel metallocenter. This process requires GTP hydrolysis, probably effectuated by UreG. The polypeptide is Urease accessory protein UreG (Staphylococcus epidermidis (strain ATCC 12228 / FDA PCI 1200)).